A 126-amino-acid chain; its full sequence is Glycine--tRNA ligase beta subunit (126 aa).

Belongs to the class-II aminoacyl-tRNA synthetase family. As to quaternary structure, tetramer of two alpha and two beta subunits.

The protein localises to the cytoplasm. It carries out the reaction tRNA(Gly) + glycine + ATP = glycyl-tRNA(Gly) + AMP + diphosphate. This Neisseria gonorrhoeae protein is Glycine--tRNA ligase beta subunit (glyS).